We begin with the raw amino-acid sequence, 415 residues long: Histidine--tRNA ligase (415 aa).

It belongs to the class-II aminoacyl-tRNA synthetase family. In terms of assembly, homodimer.

It localises to the cytoplasm. It catalyses the reaction tRNA(His) + L-histidine + ATP = L-histidyl-tRNA(His) + AMP + diphosphate + H(+). The polypeptide is Histidine--tRNA ligase (Gluconobacter oxydans (strain 621H) (Gluconobacter suboxydans)).